The chain runs to 583 residues: MPKPINVRVTTMDAELEFAIQPNTTGKQLFDQVVKTVGLREVWFFGLQYVDSKGYSTWLKLNKKVTQQDVKKENPLQFKFRAKFFPEDVSEELIQEITQRLFFLQVKEAILNDEIYCPPETAVLLASYAVQAKYGDYNKEIHKPGYLANDRLLPQRVLEQHKLTKEQWEERIQNWHEEHRGMLREDSMMEYLKIAQDLEMYGVNYFEIKNKKGTELWLGVDALGLNIYEHDDKLTPKIGFPWSEIRNISFNDKKFVIKPIDKKAPDFVFYAPRLRINKRILALCMGNHELYMRRRKPDTIEVQQMKAQAREEKHQKQLERAQLENEKKKREIAEKEKERIEREKEELMERLRQIEEQTMKAQKELEEQTRKALELDQERKRAKEEAERLEKERQAAEEAKSALAKQAADQMKNQEQLAAELAEFTAKIALLEEAKKKKEEEATEWQHKAFAAQEDLEKTKEELKTVMSAPPPPPPPPVIPPTENEHDEHDENNAEASAELSNDGVMNHRSEEERVTETQKNERVKKQLQALSSELAQARDETKKTQNDVLHAENVKAGRDKYKTLRQIRQGNTKQRIDEFEAM.

Residues 5–295 form the FERM domain; it reads INVRVTTMDA…GNHELYMRRR (291 aa). 60 to 63 lines the a 1,2-diacyl-sn-glycero-3-phospho-(1D-myo-inositol) pocket; it reads KLNK. An N6-succinyllysine modification is found at K83. A 1,2-diacyl-sn-glycero-3-phospho-(1D-myo-inositol) is bound at residue K278. Disordered stretches follow at residues 309-336, 374-407, and 460-526; these read AREEKHQKQLERAQLENEKKKREIAEKE, ELDQERKRAKEEAERLEKERQAAEEAKSALAKQA, and KEEL…RVKK. Positions 374-400 are enriched in basic and acidic residues; it reads ELDQERKRAKEEAERLEKERQAAEEAK. Over residues 469–480 the composition is skewed to pro residues; the sequence is APPPPPPPPVIP. 2 stretches are compositionally biased toward basic and acidic residues: residues 483–492 and 506–525; these read ENEHDEHDEN and MNHRSEEERVTETQKNERVK. T564 is subject to Phosphothreonine; by ROCK2.

In terms of assembly, interacts with CPNE1 (via VWFA domain) and CPNE4 (via VWFA domain). Binds NHERF1. Interacts with NHERF1, NHERF2, LAYN, MME/NEP and ICAM2. Interacts (via FERM domain) with SPN/CD43 cytoplasmic tail. Interacts with CD44. Interacts with CLIC5; may work together in a complex which also includes EZR and MYO6 to stabilize linkages between the plasma membrane and subjacent actin cytoskeleton at the base of stereocilia. In terms of processing, phosphorylated by tyrosine-protein kinases. Phosphorylation by ROCK2 suppresses the head-to-tail association of the N-terminal and C-terminal halves resulting in an opened conformation which is capable of actin and membrane-binding.

Its subcellular location is the cell membrane. The protein localises to the cytoplasm. The protein resides in the cytoskeleton. It is found in the cleavage furrow. It localises to the cell projection. Its subcellular location is the microvillus. The protein localises to the stereocilium. Its activity is regulated as follows. A head-to-tail association, of the N-terminal and C-terminal halves results in a closed conformation (inactive form) which is incapable of actin or membrane-binding. Its function is as follows. Probably plays a crucial role in the binding of the barbed end of actin filaments to the plasma membrane. The chain is Radixin (RDX) from Bos taurus (Bovine).